The sequence spans 333 residues: Chlorophyllide reductase 35.5 kDa chain (333 aa).

Residues methionine 1–glutamate 17 are compositionally biased toward basic and acidic residues. Residues methionine 1–glutamate 30 are disordered. Residues glycine 45 to phenylalanine 50 and lysine 74 contribute to the ATP site. Residue serine 49 participates in Mg(2+) binding. Residues cysteine 130 and cysteine 165 each coordinate [4Fe-4S] cluster. Asparagine 219 to lysine 220 lines the ATP pocket.

This sequence belongs to the NifH/BchL/ChlL family. As to quaternary structure, homodimer. Chlorophyllide reductase is composed of three subunits; BchX, BchY and BchZ. [4Fe-4S] cluster is required as a cofactor.

The catalysed reaction is 3-deacetyl-3-vinylbacteriochlorophyllide a + 2 oxidized [2Fe-2S]-[ferredoxin] + ADP + phosphate = chlorophyllide a + 2 reduced [2Fe-2S]-[ferredoxin] + ATP + H2O + H(+). It catalyses the reaction bacteriochlorophyllide a + 2 oxidized [2Fe-2S]-[ferredoxin] + ADP + phosphate = 3-acetyl-3-devinylchlorophyllide a + 2 reduced [2Fe-2S]-[ferredoxin] + ATP + H2O + H(+). It carries out the reaction 3-deacetyl-3-(1-hydroxyethyl)bacteriochlorophyllide a + 2 oxidized [2Fe-2S]-[ferredoxin] + ADP + phosphate = 3-devinyl-3-(1-hydroxyethyl)chlorophyllide a + 2 reduced [2Fe-2S]-[ferredoxin] + ATP + H2O + H(+). The protein operates within porphyrin-containing compound metabolism; bacteriochlorophyll biosynthesis. Converts chlorophylls (Chl) into bacteriochlorophylls (BChl) by reducing ring B of the tetrapyrrole. This chain is Chlorophyllide reductase 35.5 kDa chain (bchX), found in Cereibacter sphaeroides (strain ATCC 17023 / DSM 158 / JCM 6121 / CCUG 31486 / LMG 2827 / NBRC 12203 / NCIMB 8253 / ATH 2.4.1.) (Rhodobacter sphaeroides).